The chain runs to 374 residues: CMP-N-acetylneuraminate-beta-1,4-galactoside alpha-2,3-sialyltransferase (374 aa).

Residues Met-1–Arg-8 are Cytoplasmic-facing. The helical; Signal-anchor for type II membrane protein transmembrane segment at Asn-9–Trp-28 threads the bilayer. Residues Lys-29–Ile-374 are Lumenal-facing. Residues Asn-79 and Asn-170 are each glycosylated (N-linked (GlcNAc...) asparagine). Cys-159 and Cys-313 form a disulfide bridge.

It belongs to the glycosyltransferase 29 family. The soluble form derives from the membrane form by proteolytic processing. Found in all tissues tested. High expression found in brain, liver, kidney, colon, heart and lung.

The protein localises to the golgi apparatus. It is found in the golgi stack membrane. It localises to the secreted. It catalyses the reaction a beta-D-galactosyl-(1-&gt;4)-N-acetyl-beta-D-glucosaminyl derivative + CMP-N-acetyl-beta-neuraminate = an N-acetyl-alpha-neuraminyl-(2-&gt;3)-beta-D-galactosyl-(1-&gt;4)-N-acetyl-beta-D-glucosaminyl derivative + CMP + H(+). It functions in the pathway protein modification; protein glycosylation. In terms of biological role, catalyzes the formation of the NeuAc-alpha-2,3-Gal-beta-1,4-GlcNAc-, NeuAc-alpha-2,3-Gal-beta-1,3-GlcNAc- and NeuAc-alpha-2,3-Gal-beta-1,3-GalNAc- sequences found in terminal carbohydrate groups of glycoproteins and glycolipids. The highest activity is toward Gal-beta-1,3-GlcNAc and the lowest toward Gal-beta-1,3-GalNAc. In Rattus norvegicus (Rat), this protein is CMP-N-acetylneuraminate-beta-1,4-galactoside alpha-2,3-sialyltransferase (St3gal3).